The following is a 682-amino-acid chain: Putative protein RhsE (682 aa).

Positions 348–360 (ENGEREKAQRRSL) are enriched in basic and acidic residues. Positions 348-372 (ENGEREKAQRRSLAETLQQEGSENG) are disordered.

The protein belongs to the RHS family.

Its function is as follows. Rhs elements have a nonessential function. They may play an important role in the natural ecology of the cell. This is Putative protein RhsE (rhsE) from Escherichia coli (strain K12).